We begin with the raw amino-acid sequence, 462 residues long: MVDKIQSRWPTLMNQVSFDERYVNYKDRDADTVLARRLSACNLGFVYTKNFSAKTKRMLTSATRSICATSTGNNIDFGIFAAMLRNCDKVGVNSKSLTNLQPVGGAIFEEMFNFSQRNDFFIRPTIPFVGKVRAITQSLTPSMVIMPRVNDDRFGPSGIATFNAVLSGIMPVNEPERGLYLPTDLTYNIERITRSVMHKYTDETTNMPVFMAIGPYNEMLCGNNLGNKYLPRNTAFNASSVLQGRKVGDKIAYDQKLCCCFWIGTHNETEYSVLTELQKICIRNGRASVIPDEMKEIAVIKIGVVPSNKSACASFDSKTLRIENFVFQPDHTWELTQYTDRRVFSAANVDTSDFKDVEGDVNSIFDYGYMEMAGTEDKILEEEEEETMDETPEDILRTSNLQFAQPIGNNKSSPMKREFTAMEEDKTETGDIFKLLSQQKPAKGAKSKSKKYKKTEEDLSAV.

Positions 405–462 (QPIGNNKSSPMKREFTAMEEDKTETGDIFKLLSQQKPAKGAKSKSKKYKKTEEDLSAV) are disordered. A compositionally biased stretch (basic and acidic residues) spans 415-431 (MKREFTAMEEDKTETGD). Positions 443–453 (KGAKSKSKKYK) are enriched in basic residues.

This is an uncharacterized protein from Magallana gigas (Pacific oyster).